The primary structure comprises 418 residues: tRNA(Met) cytidine acetate ligase (418 aa).

Positions 95, 161, and 186 each coordinate ATP.

The protein belongs to the TmcAL family.

Its subcellular location is the cytoplasm. It carries out the reaction cytidine(34) in elongator tRNA(Met) + acetate + ATP = N(4)-acetylcytidine(34) in elongator tRNA(Met) + AMP + diphosphate. Its function is as follows. Catalyzes the formation of N(4)-acetylcytidine (ac(4)C) at the wobble position of elongator tRNA(Met), using acetate and ATP as substrates. First activates an acetate ion to form acetyladenylate (Ac-AMP) and then transfers the acetyl group to tRNA to form ac(4)C34. The polypeptide is tRNA(Met) cytidine acetate ligase (Thermotoga petrophila (strain ATCC BAA-488 / DSM 13995 / JCM 10881 / RKU-1)).